Here is an 869-residue protein sequence, read N- to C-terminus: Histone deacetylase 4 (869 aa).

Disordered stretches follow at residues methionine 1 to serine 25, serine 128 to glutamine 167, and arginine 180 to valine 218. A compositionally biased stretch (polar residues) spans glutamate 184 to glycine 202. Phosphoserine is present on serine 251. The interval cysteine 460–aspartate 802 is histone deacetylase. Residue histidine 608 is part of the active site.

The protein belongs to the histone deacetylase family. HD type 2 subfamily. In terms of assembly, interacts with mef-2. Post-translationally, phosphorylated by serine/threonine-protein kinase kin-29 at Ser-251; the phosphorylation inhibits repression of transcription by mef-2. May be phosphorylated by either cyclic-AMP dependent or cyclic-GMP dependent protein kinases. Expressed in body-wall muscle cells, hypodermal seam cells and neuronal cells including sensory amphid neuronal processes, the nerve ring, ventral nerve cords and motor neuronal commissures.

The protein resides in the nucleus. The catalysed reaction is N(6)-acetyl-L-lysyl-[histone] + H2O = L-lysyl-[histone] + acetate. Its function is as follows. Responsible for the deacetylation of lysine residues on the N-terminal part of the core histones (H2A, H2B, H3 and H4). Histone deacetylation gives a tag for epigenetic repression and plays an important role in transcriptional regulation, cell cycle progression and developmental events. Histone deacetylases act via the formation of large multiprotein complexes. Involved in transduction of sensory signals, together with egl-4, kin-29 and mef-2; binding to transcription factor mef-2 enables negative modulation of chemoreceptor gene expression in chemosensory neurons. May be involved in muscle development. The protein is Histone deacetylase 4 (hda-4) of Caenorhabditis elegans.